The following is a 285-amino-acid chain: Undecaprenyl-diphosphatase (285 aa).

7 helical membrane passes run Gly40–Phe60, Leu89–Leu109, Asp137–Gly157, Gly171–Val191, Phe209–Ile229, Leu241–Phe261, and Ala265–Phe285.

It belongs to the UppP family.

The protein localises to the cell inner membrane. The enzyme catalyses di-trans,octa-cis-undecaprenyl diphosphate + H2O = di-trans,octa-cis-undecaprenyl phosphate + phosphate + H(+). Catalyzes the dephosphorylation of undecaprenyl diphosphate (UPP). Confers resistance to bacitracin. This is Undecaprenyl-diphosphatase from Erythrobacter litoralis (strain HTCC2594).